Consider the following 333-residue polypeptide: Glycerol-3-phosphate dehydrogenase [NAD(P)+] (333 aa).

Tyr-14, His-34, and Lys-108 together coordinate NADPH. Positions 108, 137, and 139 each coordinate sn-glycerol 3-phosphate. Ala-141 contacts NADPH. Sn-glycerol 3-phosphate contacts are provided by Lys-193, Asp-247, Ser-257, Arg-258, and Asn-259. The Proton acceptor role is filled by Lys-193. Position 258 (Arg-258) interacts with NADPH. 2 residues coordinate NADPH: Leu-282 and Glu-284.

It belongs to the NAD-dependent glycerol-3-phosphate dehydrogenase family.

The protein resides in the cytoplasm. It carries out the reaction sn-glycerol 3-phosphate + NAD(+) = dihydroxyacetone phosphate + NADH + H(+). The enzyme catalyses sn-glycerol 3-phosphate + NADP(+) = dihydroxyacetone phosphate + NADPH + H(+). The protein operates within membrane lipid metabolism; glycerophospholipid metabolism. Functionally, catalyzes the reduction of the glycolytic intermediate dihydroxyacetone phosphate (DHAP) to sn-glycerol 3-phosphate (G3P), the key precursor for phospholipid synthesis. The chain is Glycerol-3-phosphate dehydrogenase [NAD(P)+] from Blochmanniella floridana.